The sequence spans 89 residues: Small ribosomal subunit protein uS15 (89 aa).

This sequence belongs to the universal ribosomal protein uS15 family. Part of the 30S ribosomal subunit. Forms a bridge to the 50S subunit in the 70S ribosome, contacting the 23S rRNA.

Its function is as follows. One of the primary rRNA binding proteins, it binds directly to 16S rRNA where it helps nucleate assembly of the platform of the 30S subunit by binding and bridging several RNA helices of the 16S rRNA. Forms an intersubunit bridge (bridge B4) with the 23S rRNA of the 50S subunit in the ribosome. In Alcanivorax borkumensis (strain ATCC 700651 / DSM 11573 / NCIMB 13689 / SK2), this protein is Small ribosomal subunit protein uS15.